Reading from the N-terminus, the 510-residue chain is Archaeal glutamate synthase [NADPH] (510 aa).

4Fe-4S ferredoxin-type domains are found at residues 10–37 (YKVEVDPNRCMLCERCTIECSWGVYRRE) and 38–68 (GDRIISYSNRCGACHRCVVMCPRDAITIKEN). [4Fe-4S] cluster-binding residues include cysteine 19, cysteine 22, cysteine 25, cysteine 29, cysteine 48, cysteine 51, cysteine 54, and cysteine 58.

The protein belongs to the glutamate synthase family. Requires FMN as cofactor.

The catalysed reaction is 2 L-glutamate + NADP(+) = L-glutamine + 2-oxoglutarate + NADPH + H(+). This chain is Archaeal glutamate synthase [NADPH], found in Methanocaldococcus jannaschii (strain ATCC 43067 / DSM 2661 / JAL-1 / JCM 10045 / NBRC 100440) (Methanococcus jannaschii).